We begin with the raw amino-acid sequence, 216 residues long: Protein Syd (216 aa).

It belongs to the Syd family.

It localises to the cell inner membrane. Functionally, interacts with the SecY protein in vivo. May bind preferentially to an uncomplexed state of SecY, thus functioning either as a chelating agent for excess SecY in the cell or as a regulatory factor that negatively controls the translocase function. This is Protein Syd from Shewanella sp. (strain MR-4).